The sequence spans 685 residues: Augmin complex subunit dgt5 (685 aa).

Coiled coils occupy residues 87–165 and 342–379; these read LQRY…NKIQ and NMRNFNRSQNEFLREQIEQLRLELDAGAKQLENHDLKL.

Component of the augmin complex composed of dgt2, dgt3, dgt4, dgt5, dgt6, msd1, msd5 and wac. The complex interacts directly or indirectly with microtubules and is required for centrosome-independent generation of spindle microtubules.

It localises to the cytoplasm. The protein resides in the cytoskeleton. It is found in the spindle. The protein localises to the chromosome. Its subcellular location is the centromere. It localises to the kinetochore. The protein resides in the microtubule organizing center. It is found in the centrosome. In terms of biological role, as part of the augmin complex, plays a role in centrosome-independent generation of spindle microtubules. The complex is required for mitotic spindle assembly through its involvement in localizing gamma-tubulin to spindle microtubules. This chain is Augmin complex subunit dgt5, found in Drosophila melanogaster (Fruit fly).